The chain runs to 385 residues: MNPVPAQREYFLDSIRAWLMLLGIPFHISLIYSSHTWHVNSAEPSLWLTLFNDFIHSFRMQVFFVISGYFSYMLFLRYPLKKWWKVRVERVGIPMLTAIPLLTLPQFIMLQYVKGKAESWPGLSLYDKYNTLAWELISHLWFLLVLVVMTTLCVWIFKRIRNNLENSDKTNKKFSMVKLSVIFLCLGIGYAVIRRTIFIVYPPILSNGMFNFIVMQTLFYLPFFILGALAFIFPHLKALFTTPSRGCTLAAALAFVAYLLNQRYGSGDAWMYETESVITMVLGLWMVNVVFSFGHRLLNFQSARVTYFVNASLFIYLVHHPLTLFFGAYITPHITSNWLGFLCGLIFVVGIAIILYEIHLRIPLLKFLFSGKPVVKRENDKAPAR.

10 helical membrane-spanning segments follow: residues 17-37 (AWLM…SHTW), 60-80 (MQVF…RYPL), 91-111 (VGIP…IMLQ), 137-157 (ISHL…VWIF), 173-193 (KFSM…YAVI), 212-232 (FIVM…LAFI), 239-259 (LFTT…VAYL), 274-294 (TESV…FSFG), 311-331 (ASLF…AYIT), and 338-358 (WLGF…LYEI).

This sequence belongs to the acyltransferase 3 family. OpgC subfamily.

The protein localises to the cell membrane. Its pathway is glycan metabolism; osmoregulated periplasmic glucan (OPG) biosynthesis. In terms of biological role, necessary for the succinyl substitution of periplasmic glucans. Could catalyze the transfer of succinyl residues from the cytoplasmic side of the membrane to the nascent glucan backbones on the periplasmic side of the membrane. The protein is Glucans biosynthesis protein C of Shigella sonnei (strain Ss046).